We begin with the raw amino-acid sequence, 790 residues long: Histone-lysine N-methyltransferase, H3 lysine-9 specific SUVH6 (790 aa).

Residues 251-271 (QLRILGVGTSSGSSSGDSSRN) form a disordered region. The span at 256–268 (GVGTSSGSSSGDS) shows a compositional bias: low complexity. The YDG domain maps to 330–482 (GEVPGVEVGD…MNVFKFQLRR (153 aa)). The 63-residue stretch at 551–613 (KSCCCTTRCT…SCYLRVTQHG (63 aa)) folds into the Pre-SET domain. The Zn(2+) site is built by Cys-553, Cys-554, Cys-555, Cys-559, Cys-567, Cys-569, Cys-595, Cys-599, Cys-601, and Cys-605. Residues 616–760 (LPLEIFKTKS…PLQELCYDYN (145 aa)) form the SET domain. S-adenosyl-L-methionine contacts are provided by residues 626–628 (RGW), Asp-662, Tyr-664, Arg-714, and 717–718 (NH). Zn(2+) is bound by residues Cys-720, Cys-778, Cys-780, and Cys-785. The 17-residue stretch at 774 to 790 (KQKPCFCGAAVCRRRLY) folds into the Post-SET domain.

This sequence belongs to the class V-like SAM-binding methyltransferase superfamily. Histone-lysine methyltransferase family. Suvar3-9 subfamily.

Its subcellular location is the nucleus. The protein localises to the chromosome. The protein resides in the centromere. The catalysed reaction is N(6)-methyl-L-lysyl(9)-[histone H3] + S-adenosyl-L-methionine = N(6),N(6)-dimethyl-L-lysyl(9)-[histone H3] + S-adenosyl-L-homocysteine + H(+). It catalyses the reaction L-lysyl(9)-[histone H3] + S-adenosyl-L-methionine = N(6)-methyl-L-lysyl(9)-[histone H3] + S-adenosyl-L-homocysteine + H(+). Its function is as follows. Histone methyltransferase. Methylates 'Lys-9' of histone H3. H3 'Lys-9' methylation represents a specific tag for epigenetic transcriptional repression. Seems to act preferentially on dsMRNA. This is Histone-lysine N-methyltransferase, H3 lysine-9 specific SUVH6 (SUVH6) from Arabidopsis thaliana (Mouse-ear cress).